A 579-amino-acid chain; its full sequence is Glutamine--tRNA ligase (579 aa).

The 'HIGH' region signature appears at 41–51 (PEPNGYLHIGH). ATP contacts are provided by residues 42–44 (EPN) and 48–54 (HIGHAKA). L-glutamine is bound by residues Asp74 and Tyr218. ATP-binding positions include Thr237, 285–286 (RL), and 293–295 (MSK). Residues 292–296 (VMSKR) carry the 'KMSKS' region motif.

This sequence belongs to the class-I aminoacyl-tRNA synthetase family. Monomer.

The protein localises to the cytoplasm. The catalysed reaction is tRNA(Gln) + L-glutamine + ATP = L-glutaminyl-tRNA(Gln) + AMP + diphosphate. The chain is Glutamine--tRNA ligase from Xanthomonas oryzae pv. oryzae (strain MAFF 311018).